The sequence spans 148 residues: Troponin C (148 aa).

EF-hand domains lie at 8-43, 44-79, 81-116, and 117-148; these read KQFN…LALH, VSDD…KVQE, EDER…LGDD, and LNDD…LMLG. D130, D132, S134, T136, and E141 together coordinate Ca(2+).

The protein belongs to the troponin C family.

Its function is as follows. Troponin is the central regulatory protein of striated muscle contraction. Tn consists of three components: Tn-I which is the inhibitor of actomyosin ATPase, Tn-T which contains the binding site for tropomyosin and Tn-C. The binding of calcium to Tn-C abolishes the inhibitory action of Tn on actin filaments. This chain is Troponin C, found in Todarodes pacificus (Japanese flying squid).